A 338-amino-acid chain; its full sequence is L-serine dehydratase (338 aa).

An N6-(pyridoxal phosphate)lysine modification is found at Lys-39.

The protein belongs to the serine/threonine dehydratase family. Pyridoxal 5'-phosphate serves as cofactor.

It is found in the cytoplasm. The enzyme catalyses L-serine = pyruvate + NH4(+). It functions in the pathway carbohydrate biosynthesis; gluconeogenesis. The polypeptide is L-serine dehydratase (SDL1) (Saccharomyces cerevisiae (strain AWRI1631) (Baker's yeast)).